Reading from the N-terminus, the 325-residue chain is MIEENLKQKIHDKFVAAKKNGHLKVTHAESKKLKDPQTTTQYWVTFAPSLALKPDANKNSDSKAEDPFANPDEELVVTEDLNGDGEYKLLLNKFPVVPEHSLLVTSEFKDQRSALTPSDLMTAYNVLCSLQGDKDDDVTCERYLVFYNCGPHSGSSQDHKHLQIMQMPEKFIPFQDVLCNGKDHFLPTFNAEPLQDDKVSFAHFVLPLPESSDQVDEDLLAMCYVSLMQRALTFFQDWTNESPELTKSYNVLLTKKWICVVPRSHAKSGPPLMLNINSTGYCGMILVKDREKLENLTEDPHLVDKSLLQCGFPNTAGQKPTEYHY.

Residues Lys-53, 92-93 (NK), Asn-148, and 154-157 (GSSQ) contribute to the substrate site. The active-site Nucleophile is the His-161. Residues Gln-163, 277–279 (NST), Met-284, and Lys-288 contribute to the substrate site.

This sequence belongs to the ATP adenylyltransferase family. In terms of assembly, monomer. A divalent metal cation is required as a cofactor.

It localises to the cytoplasm. Its subcellular location is the nucleus. The catalysed reaction is ADP + ATP + H(+) = P(1),P(4)-bis(5'-adenosyl) tetraphosphate + phosphate. It catalyses the reaction sulfate + ADP + H(+) = adenosine 5'-phosphosulfate + phosphate. Functionally, ap4A phosphorylase catalyzes the phosphorolytic degradation of bis(5'-adenosyl) tetraphosphate (Ap4A) into ADP and ATP. Can also use other Np4N' nucleotides (where N and N' stand for A,C,G or U) as substrates, but prefers A-containing substrates. Cannot catalyze the reverse reaction. Additionally, this enzyme can also catalyze the phosphorolytic degradation of adenosine 5'-phosphosulfate (AMPS) into ADP and sulfate, the reversible exchange reaction between inorganic phosphate and the beta-phosphate of a nucleoside diphosphate (NDP), and the synthesis of Ap4A from AMPS plus ATP. The sequence is that of Diadenosine 5',5'''-P1,P4-tetraphosphate phosphorylase 2 from Saccharomyces cerevisiae (strain ATCC 204508 / S288c) (Baker's yeast).